Reading from the N-terminus, the 233-residue chain is Putative N-acetylmannosamine-6-phosphate 2-epimerase (233 aa).

Belongs to the NanE family.

It catalyses the reaction an N-acyl-D-glucosamine 6-phosphate = an N-acyl-D-mannosamine 6-phosphate. It participates in amino-sugar metabolism; N-acetylneuraminate degradation; D-fructose 6-phosphate from N-acetylneuraminate: step 3/5. Functionally, converts N-acetylmannosamine-6-phosphate (ManNAc-6-P) to N-acetylglucosamine-6-phosphate (GlcNAc-6-P). The protein is Putative N-acetylmannosamine-6-phosphate 2-epimerase of Yersinia pseudotuberculosis serotype O:3 (strain YPIII).